The chain runs to 201 residues: Molybdenum cofactor guanylyltransferase (201 aa).

Residues 14–16 (LAG), Lys-31, and Asp-104 each bind GTP. Asp-104 lines the Mg(2+) pocket.

This sequence belongs to the MobA family. Monomer. The cofactor is Mg(2+).

The protein resides in the cytoplasm. It carries out the reaction Mo-molybdopterin + GTP + H(+) = Mo-molybdopterin guanine dinucleotide + diphosphate. Its function is as follows. Transfers a GMP moiety from GTP to Mo-molybdopterin (Mo-MPT) cofactor (Moco or molybdenum cofactor) to form Mo-molybdopterin guanine dinucleotide (Mo-MGD) cofactor. This chain is Molybdenum cofactor guanylyltransferase, found in Helicobacter pylori (strain G27).